The sequence spans 173 residues: Shikimate kinase 1 (173 aa).

ATP is bound at residue Gly14–Thr19. Ser18 contacts Mg(2+). 3 residues coordinate substrate: Asp36, Arg60, and Gly82. Arg120 provides a ligand contact to ATP. Arg140 contributes to the substrate binding site. Gln157 serves as a coordination point for ATP.

Belongs to the shikimate kinase family. As to quaternary structure, monomer. The cofactor is Mg(2+).

The protein localises to the cytoplasm. The catalysed reaction is shikimate + ATP = 3-phosphoshikimate + ADP + H(+). It participates in metabolic intermediate biosynthesis; chorismate biosynthesis; chorismate from D-erythrose 4-phosphate and phosphoenolpyruvate: step 5/7. Its function is as follows. Catalyzes the specific phosphorylation of the 3-hydroxyl group of shikimic acid using ATP as a cosubstrate. The polypeptide is Shikimate kinase 1 (Shigella boydii serotype 18 (strain CDC 3083-94 / BS512)).